A 447-amino-acid polypeptide reads, in one-letter code: N-succinylarginine dihydrolase (447 aa).

Substrate is bound by residues alanine 19–serine 28, asparagine 110, and histidine 137–arginine 138. The active site involves glutamate 174. Arginine 212 provides a ligand contact to substrate. Histidine 248 is an active-site residue. Substrate-binding residues include aspartate 250 and asparagine 359. Cysteine 365 serves as the catalytic Nucleophile.

This sequence belongs to the succinylarginine dihydrolase family. Homodimer.

It catalyses the reaction N(2)-succinyl-L-arginine + 2 H2O + 2 H(+) = N(2)-succinyl-L-ornithine + 2 NH4(+) + CO2. Its pathway is amino-acid degradation; L-arginine degradation via AST pathway; L-glutamate and succinate from L-arginine: step 2/5. In terms of biological role, catalyzes the hydrolysis of N(2)-succinylarginine into N(2)-succinylornithine, ammonia and CO(2). The chain is N-succinylarginine dihydrolase from Salmonella schwarzengrund (strain CVM19633).